Here is a 300-residue protein sequence, read N- to C-terminus: MSYYFKNLKPDLNSDVEEDDGNLLESIMANKSKREIDEQESSDDELKTLSFGSLKKAETIIDEEDFKDTKPVHKKPITTTYREESFDEDDDSEDKSDEDAGFFEEDSEDETHHGQKVPKKKSKHAPIEQSSKKRVPRVRNIPGLEIPRNKRSNLYQDIRFDKSTGKALDSSIIRKRYQFLDEYREKEIDELQKLLQDRKFLSKIDQGEREEMEQRLKSMKSRLQSMKNKDLEREILKEYENDMNKNNNTRYHLKKSEKRKVVQKWKFDHMKAKQREKVMERKRKKRLGKEFKQFEFHNRR.

Phosphoserine occurs at positions 14, 41, and 42. A disordered region spans residues 60–146; it reads IIDEEDFKDT…RVRNIPGLEI (87 aa). Residues 85–109 are compositionally biased toward acidic residues; that stretch reads SFDEDDDSEDKSDEDAGFFEEDSED. Residues 114–124 show a composition bias toward basic residues; that stretch reads GQKVPKKKSKH. A coiled-coil region spans residues 203-248; sequence KIDQGEREEMEQRLKSMKSRLQSMKNKDLEREILKEYENDMNKNNN.

This sequence belongs to the RRP36 family. As to quaternary structure, associates with 90S and pre-40S pre-ribosomal particles. Interacts with CKA1, CKA2, CKB1, CKB2, PWP2, UTP15, UTP17 and UTP22.

It localises to the nucleus. Its subcellular location is the nucleolus. In terms of biological role, component of the 90S pre-ribosome involved in the maturation of rRNAs. Required for early cleavages of the pre-RNAs in the 40S ribosomal subunit maturation pathway. This Saccharomyces cerevisiae (strain JAY291) (Baker's yeast) protein is rRNA biogenesis protein RRP36 (RRP36).